The following is a 188-amino-acid chain: GTP cyclohydrolase 1 (188 aa).

Positions 78, 81, and 150 each coordinate Zn(2+).

This sequence belongs to the GTP cyclohydrolase I family. Toroid-shaped homodecamer, composed of two pentamers of five dimers.

It catalyses the reaction GTP + H2O = 7,8-dihydroneopterin 3'-triphosphate + formate + H(+). It participates in cofactor biosynthesis; 7,8-dihydroneopterin triphosphate biosynthesis; 7,8-dihydroneopterin triphosphate from GTP: step 1/1. The chain is GTP cyclohydrolase 1 from Halalkalibacterium halodurans (strain ATCC BAA-125 / DSM 18197 / FERM 7344 / JCM 9153 / C-125) (Bacillus halodurans).